The sequence spans 461 residues: Cysteine--tRNA ligase (461 aa).

Position 28 (cysteine 28) interacts with Zn(2+). The short motif at 30-40 (ITVYDLCHIGH) is the 'HIGH' region element. 3 residues coordinate Zn(2+): cysteine 209, histidine 234, and glutamate 238. A 'KMSKS' region motif is present at residues 266 to 270 (KMSKS). Residue lysine 269 coordinates ATP.

The protein belongs to the class-I aminoacyl-tRNA synthetase family. In terms of assembly, monomer. Zn(2+) is required as a cofactor.

It is found in the cytoplasm. The catalysed reaction is tRNA(Cys) + L-cysteine + ATP = L-cysteinyl-tRNA(Cys) + AMP + diphosphate. This Shigella flexneri protein is Cysteine--tRNA ligase.